A 492-amino-acid chain; its full sequence is GDP-Man:Man(3)GlcNAc(2)-PP-Dol alpha-1,2-mannosyltransferase (492 aa).

Residues 1-19 (MAADTGSWCVYAVLRFFYS) are Lumenal-facing. The helical transmembrane segment at 20 to 40 (LFFPGLMICGVLCVYLVIGLW) threads the bilayer. Topologically, residues 41–233 (VIRWHLQRKK…SRNALLSKAK (193 aa)) are cytoplasmic. Positions 234-254 (LIYYYLFAFVYGLVGSCSDIV) form an intramembrane region, helical. The Cytoplasmic portion of the chain corresponds to 255 to 399 (MVNSSWTLNH…IGLHTMWNEH (145 aa)). The segment at residues 400–420 (FGIGVVECMAAGTVILAHNSG) is an intramembrane region (helical). Over 421-492 (GPKLDIVIPH…FLCSMEKLLT (72 aa)) the chain is Cytoplasmic.

This sequence belongs to the glycosyltransferase group 1 family. Glycosyltransferase 4 subfamily.

The protein localises to the endoplasmic reticulum membrane. It carries out the reaction an alpha-D-Man-(1-&gt;3)-[alpha-D-Man-(1-&gt;6)]-beta-D-Man-(1-&gt;4)-beta-D-GlcNAc-(1-&gt;4)-alpha-D-GlcNAc-diphospho-di-trans,poly-cis-dolichol + 2 GDP-alpha-D-mannose = an alpha-D-Man-(1-&gt;2)-alpha-D-Man-(1-&gt;2)-alpha-D-Man-(1-&gt;3)-[alpha-D-Man-(1-&gt;6)]-beta-D-Man-(1-&gt;4)-beta-D-GlcNAc-(1-&gt;4)-alpha-D-GlcNAc-diphospho-di-trans,poly-cis-dolichol + 2 GDP + 2 H(+). It participates in protein modification; protein glycosylation. In terms of biological role, GDP-Man:Man(3)GlcNAc(2)-PP-Dol alpha-1,2-mannosyltransferase that operates in the biosynthetic pathway of dolichol-linked oligosaccharides, the glycan precursors employed in protein asparagine (N)-glycosylation. The assembly of dolichol-linked oligosaccharides begins on the cytosolic side of the endoplasmic reticulum membrane and finishes in its lumen. The sequential addition of sugars to dolichol pyrophosphate produces dolichol-linked oligosaccharides containing fourteen sugars, including two GlcNAcs, nine mannoses and three glucoses. Once assembled, the oligosaccharide is transferred from the lipid to nascent proteins by oligosaccharyltransferases. Catalyzes, on the cytoplasmic face of the endoplasmic reticulum, the addition of the fourth and fifth mannose residues to the dolichol-linked oligosaccharide chain, to produce Man(5)GlcNAc(2)-PP-dolichol core oligosaccharide. Man(5)GlcNAc(2)-PP-dolichol is a substrate for ALG3, the following enzyme in the biosynthetic pathway. The protein is GDP-Man:Man(3)GlcNAc(2)-PP-Dol alpha-1,2-mannosyltransferase of Mus musculus (Mouse).